The following is a 435-amino-acid chain: GTPase Der (435 aa).

EngA-type G domains are found at residues 4–167 (PVVA…PAEK) and 175–350 (ISFS…DNQN). GTP-binding positions include 10-17 (GQPNVGKS), 57-61 (DTGGI), 119-122 (NKAD), 181-188 (GRPNVGKS), 228-232 (DTAGI), and 293-296 (NKWD). Positions 351 to 435 (QRIQSSVLND…PIKILPRKRK (85 aa)) constitute a KH-like domain.

This sequence belongs to the TRAFAC class TrmE-Era-EngA-EngB-Septin-like GTPase superfamily. EngA (Der) GTPase family. As to quaternary structure, associates with the 50S ribosomal subunit.

GTPase that plays an essential role in the late steps of ribosome biogenesis. The polypeptide is GTPase Der (Lactobacillus helveticus (strain DPC 4571)).